A 304-amino-acid chain; its full sequence is Pyridoxal 5'-phosphate synthase subunit PdxS (304 aa).

Asp-34 lines the D-ribose 5-phosphate pocket. Lys-91 serves as the catalytic Schiff-base intermediate with D-ribose 5-phosphate. Gly-163 serves as a coordination point for D-ribose 5-phosphate. Residue Arg-175 participates in D-glyceraldehyde 3-phosphate binding. Residues Gly-224 and 245 to 246 contribute to the D-ribose 5-phosphate site; that span reads GS.

Belongs to the PdxS/SNZ family. In the presence of PdxT, forms a dodecamer of heterodimers.

The catalysed reaction is aldehydo-D-ribose 5-phosphate + D-glyceraldehyde 3-phosphate + L-glutamine = pyridoxal 5'-phosphate + L-glutamate + phosphate + 3 H2O + H(+). Its pathway is cofactor biosynthesis; pyridoxal 5'-phosphate biosynthesis. Functionally, catalyzes the formation of pyridoxal 5'-phosphate from ribose 5-phosphate (RBP), glyceraldehyde 3-phosphate (G3P) and ammonia. The ammonia is provided by the PdxT subunit. Can also use ribulose 5-phosphate and dihydroxyacetone phosphate as substrates, resulting from enzyme-catalyzed isomerization of RBP and G3P, respectively. The protein is Pyridoxal 5'-phosphate synthase subunit PdxS of Streptomyces avermitilis (strain ATCC 31267 / DSM 46492 / JCM 5070 / NBRC 14893 / NCIMB 12804 / NRRL 8165 / MA-4680).